A 224-amino-acid chain; its full sequence is Testis-expressed protein 30 (224 aa).

The sequence is that of Testis-expressed protein 30 (TEX30) from Bos taurus (Bovine).